We begin with the raw amino-acid sequence, 236 residues long: Aminopyrimidine aminohydrolase (236 aa).

Aspartate 44 lines the substrate pocket. Residue cysteine 135 is the Nucleophile of the active site. 2 residues coordinate substrate: tyrosine 139 and tyrosine 163. Glutamate 205 (proton donor) is an active-site residue.

This sequence belongs to the TenA family. In terms of assembly, homotetramer.

The catalysed reaction is 4-amino-5-aminomethyl-2-methylpyrimidine + H2O = 4-amino-5-hydroxymethyl-2-methylpyrimidine + NH4(+). It carries out the reaction thiamine + H2O = 5-(2-hydroxyethyl)-4-methylthiazole + 4-amino-5-hydroxymethyl-2-methylpyrimidine + H(+). It functions in the pathway cofactor biosynthesis; thiamine diphosphate biosynthesis. Functionally, catalyzes an amino-pyrimidine hydrolysis reaction at the C5' of the pyrimidine moiety of thiamine compounds, a reaction that is part of a thiamine salvage pathway. Thus, catalyzes the conversion of 4-amino-5-aminomethyl-2-methylpyrimidine to 4-amino-5-hydroxymethyl-2-methylpyrimidine (HMP). To a lesser extent, is also able to catalyze the hydrolytic cleavage of thiamine; however, this thiaminase activity is unlikely to be physiologically relevant. Therefore, is involved in the regeneration of the thiamine pyrimidine from thiamine degraded products present in the environment, rather than in thiamine degradation. This Bacillus subtilis (strain 168) protein is Aminopyrimidine aminohydrolase.